We begin with the raw amino-acid sequence, 367 residues long: Dual specificity protein phosphatase 1 (367 aa).

The Rhodanese domain maps to 20-137 (GAAQCLLLDC…FSASCPELCS (118 aa)). In terms of domain architecture, Tyrosine-protein phosphatase spans 173–314 (GPVEILSFLY…LLQFESQVLA (142 aa)). The Phosphocysteine intermediate role is filled by Cys-258. A phosphoserine; by MAPK1 and MAPK3 mark is found at Ser-359 and Ser-364.

This sequence belongs to the protein-tyrosine phosphatase family. Non-receptor class dual specificity subfamily. Post-translationally, phosphorylation at Ser-359 and Ser-364 by MAPK1/ERK2 and MAPK3/ERK1 reduces its rate of degradation. In terms of processing, 'Lys-48'-linked polyubiquitinated by NEURL3, leading to proteasomal degradation.

It localises to the nucleus. The catalysed reaction is O-phospho-L-tyrosyl-[protein] + H2O = L-tyrosyl-[protein] + phosphate. It carries out the reaction O-phospho-L-seryl-[protein] + H2O = L-seryl-[protein] + phosphate. The enzyme catalyses O-phospho-L-threonyl-[protein] + H2O = L-threonyl-[protein] + phosphate. Functionally, dual specificity phosphatase that dephosphorylates MAP kinase MAPK1/ERK2 on both 'Thr-183' and 'Tyr-185', regulating its activity during the meiotic cell cycle. The polypeptide is Dual specificity protein phosphatase 1 (Mus musculus (Mouse)).